Reading from the N-terminus, the 599-residue chain is Sulfite reductase [NADPH] flavoprotein alpha-component (599 aa).

Residues 64–202 (VTLISASQTG…AASEWRARVV (139 aa)) enclose the Flavodoxin-like domain. Residues 70–75 (SQTGNA), 117–120 (STQG), and 153–162 (LGDTSYEFFC) contribute to the FMN site. An FAD-binding FR-type domain is found at 234–448 (DAPLAATLSV…IEHNDNFRLP (215 aa)). Residues Thr-322, Ala-356, 386–389 (RLYS), 404–406 (TVG), Tyr-410, and 419–422 (GGAS) contribute to the FAD site. Residues 519-520 (SR), 525-529 (KIYVQ), and Asp-561 contribute to the NADP(+) site. Tyr-599 lines the FAD pocket.

The protein belongs to the NADPH-dependent sulphite reductase flavoprotein subunit CysJ family. This sequence in the N-terminal section; belongs to the flavodoxin family. It in the C-terminal section; belongs to the flavoprotein pyridine nucleotide cytochrome reductase family. In terms of assembly, alpha(8)-beta(8). The alpha component is a flavoprotein, the beta component is a hemoprotein. FAD serves as cofactor. FMN is required as a cofactor.

It carries out the reaction hydrogen sulfide + 3 NADP(+) + 3 H2O = sulfite + 3 NADPH + 4 H(+). Its pathway is sulfur metabolism; hydrogen sulfide biosynthesis; hydrogen sulfide from sulfite (NADPH route): step 1/1. Component of the sulfite reductase complex that catalyzes the 6-electron reduction of sulfite to sulfide. This is one of several activities required for the biosynthesis of L-cysteine from sulfate. The flavoprotein component catalyzes the electron flow from NADPH -&gt; FAD -&gt; FMN to the hemoprotein component. The sequence is that of Sulfite reductase [NADPH] flavoprotein alpha-component from Salmonella paratyphi B (strain ATCC BAA-1250 / SPB7).